The chain runs to 181 residues: Peptide deformylase (181 aa).

2 residues coordinate Fe cation: C99 and H141. E142 is an active-site residue. Residue H145 coordinates Fe cation.

The protein belongs to the polypeptide deformylase family. It depends on Fe(2+) as a cofactor.

It carries out the reaction N-terminal N-formyl-L-methionyl-[peptide] + H2O = N-terminal L-methionyl-[peptide] + formate. In terms of biological role, removes the formyl group from the N-terminal Met of newly synthesized proteins. Requires at least a dipeptide for an efficient rate of reaction. N-terminal L-methionine is a prerequisite for activity but the enzyme has broad specificity at other positions. This chain is Peptide deformylase, found in Chlamydia trachomatis serovar A (strain ATCC VR-571B / DSM 19440 / HAR-13).